A 180-amino-acid chain; its full sequence is UPF0227 protein YcfP (180 aa).

The protein belongs to the UPF0227 family.

In Escherichia coli O139:H28 (strain E24377A / ETEC), this protein is UPF0227 protein YcfP.